Reading from the N-terminus, the 329-residue chain is Malate dehydrogenase (329 aa).

11-17 serves as a coordination point for NAD(+); it reads GAAGQIA. The substrate site is built by arginine 92 and arginine 98. NAD(+) is bound by residues asparagine 105, glutamine 112, and 129 to 131; that span reads VGN. Substrate contacts are provided by asparagine 131 and arginine 162. Histidine 187 (proton acceptor) is an active-site residue.

This sequence belongs to the LDH/MDH superfamily. MDH type 2 family.

The catalysed reaction is (S)-malate + NAD(+) = oxaloacetate + NADH + H(+). Functionally, catalyzes the reversible oxidation of malate to oxaloacetate. The chain is Malate dehydrogenase from Akkermansia muciniphila (strain ATCC BAA-835 / DSM 22959 / JCM 33894 / BCRC 81048 / CCUG 64013 / CIP 107961 / Muc).